The chain runs to 154 residues: Putative pre-16S rRNA nuclease (154 aa).

Belongs to the YqgF nuclease family.

The protein resides in the cytoplasm. Could be a nuclease involved in processing of the 5'-end of pre-16S rRNA. This chain is Putative pre-16S rRNA nuclease, found in Rickettsia conorii (strain ATCC VR-613 / Malish 7).